The sequence spans 150 residues: Cytochrome c oxidase subunit 5A, mitochondrial (150 aa).

Residues M1–X41 constitute a mitochondrion transit peptide. The SIFI-degron signature appears at L2–A17. N6-acetyllysine occurs at positions 87 and 113. The residue at position 141 (T141) is a Phosphothreonine.

This sequence belongs to the cytochrome c oxidase subunit 5A family. As to quaternary structure, component of the cytochrome c oxidase (complex IV, CIV), a multisubunit enzyme composed of 14 subunits. The complex is composed of a catalytic core of 3 subunits MT-CO1, MT-CO2 and MT-CO3, encoded in the mitochondrial DNA, and 11 supernumerary subunits COX4I, COX5A, COX5B, COX6A, COX6B, COX6C, COX7A, COX7B, COX7C, COX8 and NDUFA4, which are encoded in the nuclear genome. The complex exists as a monomer or a dimer and forms supercomplexes (SCs) in the inner mitochondrial membrane with NADH-ubiquinone oxidoreductase (complex I, CI) and ubiquinol-cytochrome c oxidoreductase (cytochrome b-c1 complex, complex III, CIII), resulting in different assemblies (supercomplex SCI(1)III(2)IV(1) and megacomplex MCI(2)III(2)IV(2)). Interacts with AFG1L. Interacts with RAB5IF. Post-translationally, in response to mitochondrial stress, the precursor protein is ubiquitinated by the SIFI complex in the cytoplasm before mitochondrial import, leading to its degradation. Within the SIFI complex, UBR4 initiates ubiquitin chain that are further elongated or branched by KCMF1.

It localises to the mitochondrion inner membrane. It participates in energy metabolism; oxidative phosphorylation. Functionally, component of the cytochrome c oxidase, the last enzyme in the mitochondrial electron transport chain which drives oxidative phosphorylation. The respiratory chain contains 3 multisubunit complexes succinate dehydrogenase (complex II, CII), ubiquinol-cytochrome c oxidoreductase (cytochrome b-c1 complex, complex III, CIII) and cytochrome c oxidase (complex IV, CIV), that cooperate to transfer electrons derived from NADH and succinate to molecular oxygen, creating an electrochemical gradient over the inner membrane that drives transmembrane transport and the ATP synthase. Cytochrome c oxidase is the component of the respiratory chain that catalyzes the reduction of oxygen to water. Electrons originating from reduced cytochrome c in the intermembrane space (IMS) are transferred via the dinuclear copper A center (CU(A)) of subunit 2 and heme A of subunit 1 to the active site in subunit 1, a binuclear center (BNC) formed by heme A3 and copper B (CU(B)). The BNC reduces molecular oxygen to 2 water molecules using 4 electrons from cytochrome c in the IMS and 4 protons from the mitochondrial matrix. The sequence is that of Cytochrome c oxidase subunit 5A, mitochondrial (COX5A) from Pan paniscus (Pygmy chimpanzee).